Consider the following 568-residue polypeptide: Urease subunit alpha (568 aa).

Residues 130-568 (GGIDTHIHFI…LPMAQRYFLF (439 aa)) enclose the Urease domain. The Ni(2+) site is built by histidine 135, histidine 137, and lysine 218. Lysine 218 is subject to N6-carboxylysine. Histidine 220 is a binding site for substrate. Residues histidine 247 and histidine 273 each coordinate Ni(2+). Histidine 321 serves as the catalytic Proton donor. Residue aspartate 361 coordinates Ni(2+).

The protein belongs to the metallo-dependent hydrolases superfamily. Urease alpha subunit family. Heterotrimer of UreA (gamma), UreB (beta) and UreC (alpha) subunits. Three heterotrimers associate to form the active enzyme. Ni cation serves as cofactor. In terms of processing, carboxylation allows a single lysine to coordinate two nickel ions.

The protein localises to the cytoplasm. It carries out the reaction urea + 2 H2O + H(+) = hydrogencarbonate + 2 NH4(+). Its pathway is nitrogen metabolism; urea degradation; CO(2) and NH(3) from urea (urease route): step 1/1. The sequence is that of Urease subunit alpha from Burkholderia pseudomallei (strain 1106a).